Here is a 733-residue protein sequence, read N- to C-terminus: Phosphoribosylformylglycinamidine synthase subunit PurL (733 aa).

Residue histidine 41 is part of the active site. Tyrosine 44 and lysine 83 together coordinate ATP. Glutamate 85 contacts Mg(2+). Residues 86 to 89 (SHNH) and arginine 108 each bind substrate. The Proton acceptor role is filled by histidine 87. Aspartate 109 serves as a coordination point for Mg(2+). The interval 212 to 232 (GASFASQELSEESEEKRPSVQ) is disordered. Residue glutamine 232 participates in substrate binding. Aspartate 260 provides a ligand contact to Mg(2+). 304 to 306 (ESQ) lines the substrate pocket. 2 residues coordinate ATP: aspartate 488 and glycine 525. Asparagine 526 provides a ligand contact to Mg(2+). Residue serine 528 coordinates substrate.

Belongs to the FGAMS family. Monomer. Part of the FGAM synthase complex composed of 1 PurL, 1 PurQ and 2 PurS subunits.

Its subcellular location is the cytoplasm. It carries out the reaction N(2)-formyl-N(1)-(5-phospho-beta-D-ribosyl)glycinamide + L-glutamine + ATP + H2O = 2-formamido-N(1)-(5-O-phospho-beta-D-ribosyl)acetamidine + L-glutamate + ADP + phosphate + H(+). It participates in purine metabolism; IMP biosynthesis via de novo pathway; 5-amino-1-(5-phospho-D-ribosyl)imidazole from N(2)-formyl-N(1)-(5-phospho-D-ribosyl)glycinamide: step 1/2. Functionally, part of the phosphoribosylformylglycinamidine synthase complex involved in the purines biosynthetic pathway. Catalyzes the ATP-dependent conversion of formylglycinamide ribonucleotide (FGAR) and glutamine to yield formylglycinamidine ribonucleotide (FGAM) and glutamate. The FGAM synthase complex is composed of three subunits. PurQ produces an ammonia molecule by converting glutamine to glutamate. PurL transfers the ammonia molecule to FGAR to form FGAM in an ATP-dependent manner. PurS interacts with PurQ and PurL and is thought to assist in the transfer of the ammonia molecule from PurQ to PurL. The sequence is that of Phosphoribosylformylglycinamidine synthase subunit PurL from Thermoanaerobacter pseudethanolicus (strain ATCC 33223 / 39E) (Clostridium thermohydrosulfuricum).